Consider the following 346-residue polypeptide: Large ribosomal subunit protein uL3 (346 aa).

Residues Lys324–Gln346 form a disordered region.

It belongs to the universal ribosomal protein uL3 family. Part of the 50S ribosomal subunit. Forms a cluster with proteins L14 and L24e.

Its function is as follows. One of the primary rRNA binding proteins, it binds directly near the 3'-end of the 23S rRNA, where it nucleates assembly of the 50S subunit. The polypeptide is Large ribosomal subunit protein uL3 (Thermococcus gammatolerans (strain DSM 15229 / JCM 11827 / EJ3)).